A 426-amino-acid chain; its full sequence is Squamosa promoter-binding-like protein 10 (426 aa).

An SBP-type zinc finger spans residues 178–255 (PPRCQAEGCK…AEHNRRRRKP (78 aa)). Positions 181, 186, 203, 206, 222, 225, 229, and 241 each coordinate Zn(2+). A Bipartite nuclear localization signal motif is present at residues 238–254 (KRSCRKRLAEHNRRRRK). Composition is skewed to low complexity over residues 268 to 287 (DAAAAPVAAGKKPSGGAATS) and 401 to 417 (SDQNNDNSHNNGGNNNN). 2 disordered regions span residues 268-290 (DAAAAPVAAGKKPSGGAATSYTG) and 392-426 (PSTATNGEVSDQNNDNSHNNGGNNNNMHLFEVDFM).

As to expression, expressed in stems, leaf sheaths, and young panicles.

It is found in the nucleus. In terms of biological role, trans-acting factor that binds specifically to the consensus nucleotide sequence 5'-TNCGTACAA-3'. In Oryza sativa subsp. indica (Rice), this protein is Squamosa promoter-binding-like protein 10 (SPL10).